Consider the following 325-residue polypeptide: Hydroxymethylglutaryl-CoA lyase, mitochondrial (325 aa).

A mitochondrion-targeting transit peptide spans 1-27 (MAAMTKALPRRLVGLASLRAVSTSSMD). The 268-residue stretch at 33 to 300 (VKIVEVGPRD…HTGVNLQKLL (268 aa)) folds into the Pyruvate carboxyltransferase domain. Position 41 (Arg-41) interacts with substrate. An a divalent metal cation-binding site is contributed by Asp-42. N6-acetyllysine; alternate is present on Lys-48. Lys-48 is modified (N6-succinyllysine; alternate). Lys-111 is modified (N6-acetyllysine). 2 positions are modified to N6-acetyllysine; alternate: Lys-137 and Lys-179. Residues Lys-137 and Lys-179 each carry the N6-succinyllysine; alternate modification. Residues His-233 and His-235 each contribute to the a divalent metal cation site. Cys-266 is a catalytic residue. A divalent metal cation is bound at residue Asn-275. A Microbody targeting signal motif is present at residues 323-325 (CKL). The residue at position 324 (Lys-324) is an N6-acetyllysine.

This sequence belongs to the HMG-CoA lyase family. In terms of assembly, homodimer; disulfide-linked. Can also form homotetramers.

It localises to the mitochondrion matrix. The protein resides in the peroxisome. It carries out the reaction (3S)-3-hydroxy-3-methylglutaryl-CoA = acetoacetate + acetyl-CoA. It functions in the pathway metabolic intermediate metabolism; (S)-3-hydroxy-3-methylglutaryl-CoA degradation; acetoacetate from (S)-3-hydroxy-3-methylglutaryl-CoA: step 1/1. Functionally, mitochondrial 3-hydroxy-3-methylglutaryl-CoA lyase that catalyzes a cation-dependent cleavage of (S)-3-hydroxy-3-methylglutaryl-CoA into acetyl-CoA and acetoacetate, a key step in ketogenesis. Terminal step in leucine catabolism. Ketone bodies (beta-hydroxybutyrate, acetoacetate and acetone) are essential as an alternative source of energy to glucose, as lipid precursors and as regulators of metabolism. The chain is Hydroxymethylglutaryl-CoA lyase, mitochondrial (HMGCL) from Macaca fascicularis (Crab-eating macaque).